The sequence spans 188 residues: Putative manganese efflux pump MntP (188 aa).

6 helical membrane passes run 3–23 (FYALLLIALGMSMDAFAVALA), 35–55 (IAATALVFGTVEALTPLAGWV), 63–83 (FISEWDHWVAFVLLGGLGLKM), 104–126 (WMTVLTAFGTSIDSMIVGVGLAF), 140–160 (MATTVMVAVGLTAGRALGVLF), and 167–187 (AGGLVLIAIGTWTLLSHLGLI).

The protein belongs to the MntP (TC 9.B.29) family.

It is found in the cell inner membrane. In terms of biological role, probably functions as a manganese efflux pump. This chain is Putative manganese efflux pump MntP, found in Neisseria meningitidis serogroup B (strain ATCC BAA-335 / MC58).